The following is a 97-amino-acid chain: Co-chaperonin GroES (97 aa).

The protein belongs to the GroES chaperonin family. Heptamer of 7 subunits arranged in a ring. Interacts with the chaperonin GroEL.

The protein resides in the cytoplasm. Together with the chaperonin GroEL, plays an essential role in assisting protein folding. The GroEL-GroES system forms a nano-cage that allows encapsulation of the non-native substrate proteins and provides a physical environment optimized to promote and accelerate protein folding. GroES binds to the apical surface of the GroEL ring, thereby capping the opening of the GroEL channel. The chain is Co-chaperonin GroES from Yersinia pseudotuberculosis serotype O:1b (strain IP 31758).